The sequence spans 422 residues: UDP-N-acetylglucosamine 1-carboxyvinyltransferase (422 aa).

Residue 22 to 23 (KN) participates in phosphoenolpyruvate binding. Position 93 (R93) interacts with UDP-N-acetyl-alpha-D-glucosamine. The active-site Proton donor is C117. A 2-(S-cysteinyl)pyruvic acid O-phosphothioketal modification is found at C117. Residues 122 to 126 (RPVDL), D308, and L330 contribute to the UDP-N-acetyl-alpha-D-glucosamine site.

This sequence belongs to the EPSP synthase family. MurA subfamily.

The protein resides in the cytoplasm. The catalysed reaction is phosphoenolpyruvate + UDP-N-acetyl-alpha-D-glucosamine = UDP-N-acetyl-3-O-(1-carboxyvinyl)-alpha-D-glucosamine + phosphate. Its pathway is cell wall biogenesis; peptidoglycan biosynthesis. Its function is as follows. Cell wall formation. Adds enolpyruvyl to UDP-N-acetylglucosamine. The chain is UDP-N-acetylglucosamine 1-carboxyvinyltransferase from Helicobacter pylori (strain HPAG1).